The following is a 235-amino-acid chain: Modulator of macroautophagy TMEM150B (235 aa).

The Cytoplasmic segment spans residues 1-8 (MWGYLSLL). The helical transmembrane segment at 9-29 (PMCLAFWAIAGIWTVFSLAVV) threads the bilayer. At 30 to 51 (NKAVNLTDGFPYISVCGNVPPQ) the chain is on the extracellular side. A glycan (N-linked (GlcNAc...) asparagine) is linked at asparagine 34. The helical transmembrane segment at 52-72 (SCIFSQVLNIGAASAAWICIL) threads the bilayer. Topologically, residues 73–88 (RYYQLRDWGVRKWHNQ) are cytoplasmic. A helical membrane pass occupies residues 89 to 109 (VILWTGLLCALGTSIVGNFQE). At 110–116 (KNQRATH) the chain is on the extracellular side. Residues 117–137 (LTGAFLAFFVGIVYFWLQLFL) form a helical membrane-spanning segment. Residues 138 to 156 (SWRMKNLPQPGAPWIGPLR) are Cytoplasmic-facing. A helical membrane pass occupies residues 157 to 177 (LVLCSACFILEVAMVVLHSWS). At 178 to 180 (MRS) the chain is on the extracellular side. A helical membrane pass occupies residues 181–201 (VSAICEWVAAMLLFILFGLLA). Topologically, residues 202–235 (VDFSRLDSCTLCLQPGSGSLRPPPDSPTSLHVQL) are cytoplasmic.

Belongs to the DRAM/TMEM150 family.

The protein localises to the cell membrane. It localises to the endosome membrane. The protein resides in the cytoplasmic vesicle. It is found in the autophagosome membrane. In terms of biological role, modulator of macroautophagy that causes accumulation of autophagosomes under basal conditions and enhances autophagic flux. Represses cell death and promotes long-term clonogenic survival of cells grown in the absence of glucose in a macroautophagy-independent manner. May have some role in extracellular matrix engulfment or growth factor receptor recycling, both of which can modulate cell survival. In Bos taurus (Bovine), this protein is Modulator of macroautophagy TMEM150B.